A 252-amino-acid polypeptide reads, in one-letter code: Ribosomal RNA small subunit methyltransferase NEP1 (252 aa).

S-adenosyl-L-methionine contacts are provided by residues M176, G209, G214, and 227–232; that span reads ISNYPL.

The protein belongs to the class IV-like SAM-binding methyltransferase superfamily. RNA methyltransferase NEP1 family. Homodimer. Part of the small subunit (SSU) processome, composed of more than 70 proteins and the RNA chaperone small nucleolar RNA (snoRNA) U3.

The protein localises to the nucleus. The protein resides in the nucleolus. The enzyme catalyses a pseudouridine in rRNA + S-adenosyl-L-methionine = an N(1)-methylpseudouridine in rRNA + S-adenosyl-L-homocysteine + H(+). Its function is as follows. S-adenosyl-L-methionine-dependent pseudouridine N(1)-methyltransferase that methylates a pseudouridine in 18S rRNA. Involved the biosynthesis of the hypermodified N1-methyl-N3-(3-amino-3-carboxypropyl) pseudouridine (m1acp3-Psi) conserved in eukaryotic 18S rRNA. Also has an essential role in 40S ribosomal subunit biogenesis independent on its methyltransferase activity, facilitating the incorporation of ribosomal protein S19 during the formation of pre-ribosomes. Functionally, S-adenosyl-L-methionine-dependent pseudouridine N(1)-methyltransferase that methylates pseudouridine at position in 18S rRNA. Involved the biosynthesis of the hypermodified N1-methyl-N3-(3-amino-3-carboxypropyl) pseudouridine (m1acp3-Psi) conserved in eukaryotic 18S rRNA. Is not able to methylate uridine at this position. Also has an essential role in 40S ribosomal subunit biogenesis independent on its methyltransferase activity, facilitating the incorporation of ribosomal protein S19 during the formation of pre-ribosomes. Part of the small subunit (SSU) processome, first precursor of the small eukaryotic ribosomal subunit. During the assembly of the SSU processome in the nucleolus, many ribosome biogenesis factors, an RNA chaperone and ribosomal proteins associate with the nascent pre-rRNA and work in concert to generate RNA folding, modifications, rearrangements and cleavage as well as targeted degradation of pre-ribosomal RNA by the RNA exosome. The protein is Ribosomal RNA small subunit methyltransferase NEP1 of Drosophila melanogaster (Fruit fly).